Consider the following 350-residue polypeptide: 4-hydroxy-2-oxovalerate aldolase 3 (350 aa).

Residues valine 13 to methionine 265 form the Pyruvate carboxyltransferase domain. A substrate-binding site is contributed by arginine 21 to aspartate 22. Mn(2+) is bound at residue aspartate 22. The active-site Proton acceptor is histidine 25. The substrate site is built by serine 175 and histidine 204. The Mn(2+) site is built by histidine 204 and histidine 206. A substrate-binding site is contributed by tyrosine 295.

The protein belongs to the 4-hydroxy-2-oxovalerate aldolase family.

It catalyses the reaction (S)-4-hydroxy-2-oxopentanoate = acetaldehyde + pyruvate. The polypeptide is 4-hydroxy-2-oxovalerate aldolase 3 (lapG) (Azotobacter vinelandii (strain DJ / ATCC BAA-1303)).